The primary structure comprises 383 residues: Heterogeneous nuclear rnp K-like protein 2 (383 aa).

KH domains are found at residues Asn58 to Val122, Ile161 to Ile226, and Gln256 to Leu321. The tract at residues Arg332–Glu383 is disordered. Over residues Ser343 to Ala362 the composition is skewed to low complexity. Positions Asn363–Glu376 are enriched in polar residues.

The protein belongs to the HEK2 family. As to quaternary structure, binds RNA.

The protein localises to the cytoplasm. It localises to the P-body. Its subcellular location is the nucleus. The protein resides in the chromosome. It is found in the telomere. RNA-binding protein involved in the correct localization of transcripts in the cell. RNA localization is a widespread mechanism for achieving localized protein synthesis. Involved in structural and functional organization of telomeric chromatin and regulates silencing at the HMR locus. In Kluyveromyces lactis (strain ATCC 8585 / CBS 2359 / DSM 70799 / NBRC 1267 / NRRL Y-1140 / WM37) (Yeast), this protein is Heterogeneous nuclear rnp K-like protein 2 (HEK2).